A 2431-amino-acid chain; its full sequence is Histone-lysine N-methyltransferase trr (2431 aa).

4 disordered regions span residues 34–78 (LQKR…STAP), 135–201 (DADK…ENSG), 213–235 (ASGADSSTSVGNSTGTGTPAGTP), and 759–789 (QSANQIQMATSTSTASNPSTPNPTVNATPMN). Residues 142 to 165 (YRISTPRNSQSNPLLHRNTAFTSF) are compositionally biased toward polar residues. 3 stretches are compositionally biased toward low complexity: residues 171-183 (ASSSASSSSSTAS), 218-235 (SSTSVGNSTGTGTPAGTP), and 767-787 (ATSTSTASNPSTPNPTVNATP). The LXXLL motif 1 signature appears at 801–805 (LKQLL). Disordered stretches follow at residues 863 to 895 (PVPTATQAAGSSSSSGSVATSTTTTTVASGGSS), 918 to 973 (VGGE…QVKQ), 1226 to 1292 (HPQQ…AGGA), 1404 to 1433 (TSGGGSPASMSSAASAGSSSAGGGKLKGGS), and 1478 to 1500 (GLVGGSARTRSPSPAESPGAEKM). Composition is skewed to low complexity over residues 866 to 895 (TATQAAGSSSSSGSVATSTTTTTVASGGSS), 952 to 970 (QQQQQQLHQPQQLQPSPHQ), and 1226 to 1241 (HPQQQQQQLHQNQPQN). Over residues 1269 to 1281 (RKRRKREVQKPRR) the composition is skewed to basic residues. A compositionally biased stretch (low complexity) spans 1410-1422 (PASMSSAASAGSS). Residues 1423 to 1433 (SAGGGKLKGGS) show a composition bias toward gly residues. A Phosphothreonine modification is found at Thr-1486. 2 positions are modified to phosphoserine: Ser-1488 and Ser-1490. An LXXLL motif 2 motif is present at residues 1652 to 1656 (LANLL). Positions 1790–1836 (GGSAVKSSNGDSPGSFCASSTAPAEMVVKQEPEDEDEKTPSVPGNPT) are disordered. Residues 1794 to 1811 (VKSSNGDSPGSFCASSTA) show a composition bias toward polar residues. Residues 1895 to 1935 (TRQCVFCNQRGDGQADGPSRLLNFDVDKWVHLNCALWSNGV) form a C2HC pre-PHD-type zinc finger. A PHD-type zinc finger spans residues 1956–2003 (QACSACHQPGATIKCFKSRCNSLYHLPCAIREECVFYKNKSVHCSVHG). An LXXLL motif 3 motif is present at residues 2060-2064 (LSNLL). One can recognise an FYR N-terminal domain in the interval 2061 to 2121 (SNLLRVGNMT…CRYICSIAEA (61 aa)). Residues 2122–2209 (GCKPEFRIQV…ETLTDYRFKY (88 aa)) form the FYR C-terminal domain. One can recognise an SET domain in the interval 2291–2407 (NNVYLARSKI…RGEELSYDYK (117 aa)). Positions 2415–2431 (HKIPCACGAPNCRKWMN) constitute a Post-SET domain.

Belongs to the class V-like SAM-binding methyltransferase superfamily. Histone-lysine methyltransferase family. TRX/MLL subfamily. Component of the MLL3/4 complex composed at least of the catalytic subunit trr, ash2, Rbbp5, Dpy-30L1, wds, hcf, ptip, Pa1, Utx, Lpt and Ncoa6. Interacts with nuclear receptor EcR in an ecdysone-dependent manner. Interacts with ash2; the interaction stabilizes trr. In terms of tissue distribution, widely expressed.

The protein localises to the nucleus. It localises to the chromosome. It catalyses the reaction L-lysyl(4)-[histone H3] + 3 S-adenosyl-L-methionine = N(6),N(6),N(6)-trimethyl-L-lysyl(4)-[histone H3] + 3 S-adenosyl-L-homocysteine + 3 H(+). In terms of biological role, histone methyltransferase that acts as a coactivator for the ecdysone receptor during development. Specifically trimethylates 'Lys-4' of histone H3, a specific tag for epigenetic transcriptional activation. Recruited by EcR in an ecdysone-dependent manner causing H3 'Lys-4' trimethylation at ecdysone-inducible promoters, leading to activate expression. Plays a central role in the developing compound eye, during the progression of the morphogenetic furrow and in post-furrow differentiation of the retinal epithelium, notably by activating expression of hh. Also required for wing and abdominal development. The protein is Histone-lysine N-methyltransferase trr (trr) of Drosophila melanogaster (Fruit fly).